The primary structure comprises 446 residues: Deoxyguanosinetriphosphate triphosphohydrolase-like protein (446 aa).

The segment at Met1–Asp28 is disordered. The segment covering Gln7 to Asp28 has biased composition (basic and acidic residues). Residues Arg59–Ala252 enclose the HD domain.

The protein belongs to the dGTPase family. Type 2 subfamily.

This is Deoxyguanosinetriphosphate triphosphohydrolase-like protein from Shewanella sp. (strain MR-7).